Reading from the N-terminus, the 146-residue chain is Type II secretion system core protein G (146 aa).

The propeptide at 1–9 (MKKMRKQTG) is leader sequence. Phe10 is subject to N-methylphenylalanine. Residues 10 to 30 (FTLLEVMVVVVILGILASFVV) traverse the membrane as a helical segment.

This sequence belongs to the GSP G family. As to quaternary structure, type II secretion system is composed of four main components: the outer membrane complex, the inner membrane complex, the cytoplasmic secretion ATPase and the periplasm-spanning pseudopilus. Forms homomultimers. Interacts with EspL. Cleaved by the prepilin peptidase. Post-translationally, methylated by prepilin peptidase at the amino group of the N-terminal phenylalanine once the leader sequence is cleaved.

It localises to the cell inner membrane. Functionally, core component of the type II secretion system required for the energy-dependent secretion of extracellular factors such as proteases and toxins from the periplasm. Pseudopilin (pilin-like) protein that polymerizes to form the pseudopilus. Further polymerization triggers pseudopilus growth. This chain is Type II secretion system core protein G (epsG), found in Vibrio cholerae serotype O1 (strain ATCC 39315 / El Tor Inaba N16961).